Reading from the N-terminus, the 383-residue chain is MDAPTVGVEEEFLLVDPRTGAPTARNEAVAHTAGELGIDLQLELTRCQVETSTAVHSDIGALFGQLRDLRCGVARCAQANESRLLAVAIPPTVPHEFPVTDTPRYRRIAESFGMIAHEQGLCGCHVHVAVPDRETAVQVSNYLRPWLPMLLALTANSAIYRGSDTGYASWRSILWRRWPSAGPPPYFRTAADYDAMVTMMLSSGIVLDEKMVYWDARPSINYPTIEVRVSDVPATVGETVLLAALVRATVHTARRFLAEGNTAPAVPAEVLRAAYWKAARSGIGGDAVAPLDGRVLPARDLLDELLETVDPALEELGDRGFVSDALTALLARGNGAQRQVRAFGADHDVAAVIAELGAATLEGCAPEPANSGGGEHVPVEGRH.

Belongs to the glutamate--cysteine ligase type 2 family. YbdK subfamily.

It catalyses the reaction L-cysteine + L-glutamate + ATP = gamma-L-glutamyl-L-cysteine + ADP + phosphate + H(+). In terms of biological role, ATP-dependent carboxylate-amine ligase which exhibits weak glutamate--cysteine ligase activity. The chain is Putative glutamate--cysteine ligase 2-1 from Nocardia farcinica (strain IFM 10152).